We begin with the raw amino-acid sequence, 407 residues long: Putative mannan endo-1,4-beta-mannosidase 9 (407 aa).

The first 31 residues, 1 to 31 (MGSKRRVILLPTLGVVVLAIAAAVLLHAGEA), serve as a signal peptide directing secretion. Positions 95 and 208 each coordinate substrate. Glutamate 209 acts as the Proton donor in catalysis. A substrate-binding site is contributed by tyrosine 284. The active-site Nucleophile is glutamate 324. Substrate is bound at residue tryptophan 366.

It belongs to the glycosyl hydrolase 5 (cellulase A) family. In terms of tissue distribution, expression not detected.

It localises to the secreted. The enzyme catalyses Random hydrolysis of (1-&gt;4)-beta-D-mannosidic linkages in mannans, galactomannans and glucomannans.. The sequence is that of Putative mannan endo-1,4-beta-mannosidase 9 (MAN9) from Oryza sativa subsp. japonica (Rice).